We begin with the raw amino-acid sequence, 158 residues long: MLP-like protein 43 (158 aa).

At Ala-2 the chain carries N-acetylalanine.

Belongs to the MLP family.

The chain is MLP-like protein 43 (MLP43) from Arabidopsis thaliana (Mouse-ear cress).